Reading from the N-terminus, the 491-residue chain is UDP-N-acetylmuramate--L-alanine ligase (491 aa).

126–132 (GTHGKTT) lines the ATP pocket.

It belongs to the MurCDEF family.

The protein resides in the cytoplasm. The catalysed reaction is UDP-N-acetyl-alpha-D-muramate + L-alanine + ATP = UDP-N-acetyl-alpha-D-muramoyl-L-alanine + ADP + phosphate + H(+). Its pathway is cell wall biogenesis; peptidoglycan biosynthesis. Its function is as follows. Cell wall formation. The polypeptide is UDP-N-acetylmuramate--L-alanine ligase (Yersinia enterocolitica serotype O:8 / biotype 1B (strain NCTC 13174 / 8081)).